A 344-amino-acid polypeptide reads, in one-letter code: G-protein coupled receptor str-217 (344 aa).

At 1 to 10 the chain is on the extracellular side; it reads MLLFQKTLSR. A helical transmembrane segment spans residues 11–31; that stretch reads VAAPISVAANLILILLIIFKS. The Cytoplasmic segment spans residues 32 to 39; the sequence is PAQMGNYK. A helical membrane pass occupies residues 40–60; the sequence is YLLIGLSIFEMSYAVLDVVSE. At 61-88 the chain is on the extracellular side; the sequence is TTVLSIKKSFVVVVPYKDRSFGQETAMD. Residues 89–109 form a helical membrane-spanning segment; the sequence is INLIYCGFFGFSMGMFVVIFA. Residues 110–128 lie on the Cytoplasmic side of the membrane; the sequence is YRSFLTTGNTILRKFEGFK. Residues 129-149 form a helical membrane-spanning segment; it reads IISWFAYPLFYAIVWILVAWG. Topologically, residues 150 to 195 are extracellular; that stretch reads PLASFPEMDIVVRPFLLDELNMTVDEVAYTGRLFYSTIDNSLRYSA. N-linked (GlcNAc...) asparagine glycosylation is present at Asn170. The helical transmembrane segment at 196-216 threads the bilayer; sequence ILTGVLQWVLTASSLFLVIFF. At 217-256 the chain is on the cytoplasmic side; the sequence is GLRCYFHYGKLVQLTDVQSIRLRQLQNQLFLALVCQATVP. A helical transmembrane segment spans residues 257–277; the sequence is LILMHIPVTILYTCCVLNIVF. The Extracellular segment spans residues 278–279; it reads NP. A helical membrane pass occupies residues 280 to 300; sequence FSVATTIALFPAIDPLPTIFI. Residues 301-344 are Cytoplasmic-facing; that stretch reads VKNYRVALFEFVCPSCLCWSETLKHMGSNRITSYRSNTVNALSM.

It belongs to the nematode receptor-like protein str family. Expressed in the ADL chemosensory neurons.

The protein resides in the cell membrane. In terms of biological role, probable G-protein coupled receptor. The chain is G-protein coupled receptor str-217 from Caenorhabditis elegans.